The sequence spans 379 residues: MQTSKQDNSNIKVIVGLSGGVDSSVTALLLKQQGYDVEGLFMKNWEGDDTEDYCPAAEDLKDVLAICEKLDIPLHVENFSGEYWDRVFEHFLAEYQSGRTPNPDILCNKEVKFKAFLEHAMTLGADYIATGHYARISRDENGQCYLLKGLDNNKDQSYFLYTLQQHQLSKSMFPIGELEKPYVRQLAEEADLITHDKKDSTGICFIGERKFKDFLQQFLPAQPGDIVNTEGEVIGHHEGLMYHTLGQRKGLGIGGGFGDSGLPWFSADKNLETNQLIAVQGSDHPLLNHAFLTADTCDWVSGHCPALKQALKAKVRYRQPEQPCQILSEKNGEIIVQFDEEQTAITPGQSVVFYEGETCLGGAIITGRYHSLSEINEDK.

Residues 16 to 23 (GLSGGVDS) and methionine 42 each bind ATP. An interaction with target base in tRNA region spans residues 102–104 (NPD). Cysteine 107 acts as the Nucleophile in catalysis. Cysteine 107 and cysteine 204 are disulfide-bonded. Glycine 131 is a binding site for ATP. The segment at 154–156 (KDQ) is interaction with tRNA. The Cysteine persulfide intermediate role is filled by cysteine 204. The segment at 316-317 (RY) is interaction with tRNA.

Belongs to the MnmA/TRMU family.

The protein resides in the cytoplasm. It carries out the reaction S-sulfanyl-L-cysteinyl-[protein] + uridine(34) in tRNA + AH2 + ATP = 2-thiouridine(34) in tRNA + L-cysteinyl-[protein] + A + AMP + diphosphate + H(+). Catalyzes the 2-thiolation of uridine at the wobble position (U34) of tRNA, leading to the formation of s(2)U34. This Hydrogenovibrio crunogenus (strain DSM 25203 / XCL-2) (Thiomicrospira crunogena) protein is tRNA-specific 2-thiouridylase MnmA.